The sequence spans 505 residues: Protein disulfide-isomerase A3 (505 aa).

Residues 1 to 24 form the signal peptide; sequence MRLRRLALFPGVALLLAAARLAAA. Positions 25 to 133 constitute a Thioredoxin 1 domain; sequence SDVLELTDDN…IVSHLKKQAG (109 aa). Active-site nucleophile residues include Cys-57 and Cys-60. A disulfide bridge connects residues Cys-57 and Cys-60. The residue at position 61 (Lys-61) is an N6-methyllysine. Cysteines 85 and 92 form a disulfide. Lys-129 carries the N6-succinyllysine modification. An N6-acetyllysine modification is found at Lys-152. Lys-218 carries the post-translational modification N6-succinyllysine. Lys-252 is modified (N6-acetyllysine). Thr-319 is subject to Phosphothreonine. In terms of domain architecture, Thioredoxin 2 spans 343 to 485; the sequence is SRDGKALERF…FISYLQREAT (143 aa). Lys-362 bears the N6-acetyllysine mark. Catalysis depends on nucleophile residues Cys-406 and Cys-409. Residues Cys-406 and Cys-409 are joined by a disulfide bond. Residues 484–505 form a disordered region; that stretch reads ATNPPVIQEEKPKKKKKAQEDL. The segment covering 491-505 has biased composition (basic and acidic residues); it reads QEEKPKKKKKAQEDL. Residue Lys-494 is modified to N6-acetyllysine. A Prevents secretion from ER motif is present at residues 502–505; that stretch reads QEDL.

As to quaternary structure, part of the major histocompatibility complex class I (MHC I) peptide loading complex composed of TAP1, TAP2, B2M, MHC heavy chain, TAPBP, PDIA3, and CALR. Interacts with ERP27 and CANX. Interacts with SERPINA2 and with the S and Z variants of SERPINA1. Interacts with ATP2A2. Within the major histocompatibility complex class I (MHC I) peptide loading complex forms reversible disulfide-linked heterodimers with TAPBP as part of its protein folding chaperone activity. This is essential to assist the dynamic assembly of the MHC I complex with high affinity antigens in the endoplasmic reticulum. In terms of processing, phosphorylated. As to expression, detected in the flagellum and head region of spermatozoa (at protein level). Expressed in liver, stomach and colon (at protein level). Expressed in gastric parietal cells and chief cells (at protein level).

The protein localises to the endoplasmic reticulum. Its subcellular location is the endoplasmic reticulum lumen. The protein resides in the melanosome. The enzyme catalyses Catalyzes the rearrangement of -S-S- bonds in proteins.. Association with calcitriol does not affect its enzymatic activity. In terms of biological role, protein disulfide isomerase that catalyzes the formation, isomerization, and reduction or oxidation of disulfide bonds in client proteins and functions as a protein folding chaperone. Core component of the major histocompatibility complex class I (MHC I) peptide loading complex where it functions as an essential folding chaperone for TAPBP. Through TAPBP, assists the dynamic assembly of the MHC I complex with high affinity antigens in the endoplasmic reticulum. Therefore, plays a crucial role in the presentation of antigens to cytotoxic T cells in adaptive immunity. This Homo sapiens (Human) protein is Protein disulfide-isomerase A3.